An 863-amino-acid polypeptide reads, in one-letter code: Leucine-rich repeat and death domain-containing protein 1 (863 aa).

Disordered regions lie at residues Met1 to Ser37 and Ser51 to Leu100. Positions Ser88–Leu100 are enriched in low complexity. LRR repeat units follow at residues Cys143–Ile166, Lys167–Asp189, Leu190–Leu213, His214–Leu236, Asn238–Leu259, Gly260–Leu282, Tyr284–Leu305, Pro306–Leu328, Lys329–Leu351, Lys353–Phe374, Arg375–Cys397, Ala398–Leu420, Asn422–Leu443, Asn445–Cys466, Lys468–Leu489, Asp490–Lys513, Leu515–Leu535, Ile536–Met558, Ser560–Leu581, Glu582–Leu604, Arg606–Leu627, Leu630–Met653, Thr654–Leu676, Asn678–Leu699, Asn700–Leu722, and Ser724–Gly745. The 89-residue stretch at Glu767–Asn855 folds into the Death domain. Residues Leu856–Phe863 form an LRR 27 repeat.

The sequence is that of Leucine-rich repeat and death domain-containing protein 1 (LRRD1) from Macaca fascicularis (Crab-eating macaque).